A 159-amino-acid chain; its full sequence is 2-C-methyl-D-erythritol 2,4-cyclodiphosphate synthase (159 aa).

A divalent metal cation-binding residues include Asp-10 and His-12. 4-CDP-2-C-methyl-D-erythritol 2-phosphate-binding positions include 10–12 (DVH) and 36–37 (HS). His-44 serves as a coordination point for a divalent metal cation. Residues 58 to 60 (DIG), 63 to 67 (FPDTD), 102 to 108 (AQVPKMA), 134 to 137 (TTTE), Phe-141, and Arg-144 contribute to the 4-CDP-2-C-methyl-D-erythritol 2-phosphate site.

This sequence belongs to the IspF family. In terms of assembly, homotrimer. A divalent metal cation serves as cofactor.

It carries out the reaction 4-CDP-2-C-methyl-D-erythritol 2-phosphate = 2-C-methyl-D-erythritol 2,4-cyclic diphosphate + CMP. It participates in isoprenoid biosynthesis; isopentenyl diphosphate biosynthesis via DXP pathway; isopentenyl diphosphate from 1-deoxy-D-xylulose 5-phosphate: step 4/6. Involved in the biosynthesis of isopentenyl diphosphate (IPP) and dimethylallyl diphosphate (DMAPP), two major building blocks of isoprenoid compounds. Catalyzes the conversion of 4-diphosphocytidyl-2-C-methyl-D-erythritol 2-phosphate (CDP-ME2P) to 2-C-methyl-D-erythritol 2,4-cyclodiphosphate (ME-CPP) with a corresponding release of cytidine 5-monophosphate (CMP). This Shewanella woodyi (strain ATCC 51908 / MS32) protein is 2-C-methyl-D-erythritol 2,4-cyclodiphosphate synthase.